A 207-amino-acid chain; its full sequence is Urease accessory protein UreG (207 aa).

12-19 provides a ligand contact to GTP; the sequence is GPVGAGKT.

This sequence belongs to the SIMIBI class G3E GTPase family. UreG subfamily. Homodimer. UreD, UreF and UreG form a complex that acts as a GTP-hydrolysis-dependent molecular chaperone, activating the urease apoprotein by helping to assemble the nickel containing metallocenter of UreC. The UreE protein probably delivers the nickel.

The protein localises to the cytoplasm. Functionally, facilitates the functional incorporation of the urease nickel metallocenter. This process requires GTP hydrolysis, probably effectuated by UreG. The polypeptide is Urease accessory protein UreG (Cereibacter sphaeroides (strain ATCC 17025 / ATH 2.4.3) (Rhodobacter sphaeroides)).